A 286-amino-acid chain; its full sequence is MRYIRLCIISLLATLPLAVHASPQPLEQIKLSESQLSGRVGMIEMDLASGRTLTAWRADERFPMMSTFKVVLCGAVLARVDAGDEQLERKIHYRQQDLVDYSPVSEKHLADGMTVGELCAAAITMSDNSAANLLLATVGGPAGLTAFLRQIGDNVTRLDRWETELNEALPGDARDTTTPASMAATLRKLLNSQRLSARSQRQLLQWMVDDRVAGPLIRSVLPAGWFIADKTGASKRGARGIVALLGPNNKAERIVVIYLRDTPASMAERNQQIAGIGAALIEHWQR.

The N-terminal stretch at 1–21 (MRYIRLCIISLLATLPLAVHA) is a signal peptide. Serine 66 (acyl-ester intermediate) is an active-site residue. An intrachain disulfide couples cysteine 73 to cysteine 119. Catalysis depends on glutamate 164, which acts as the Proton acceptor. 230-232 (KTG) serves as a coordination point for substrate.

It belongs to the class-A beta-lactamase family.

The catalysed reaction is a beta-lactam + H2O = a substituted beta-amino acid. This chain is Beta-lactamase SHV-46 (bla), found in Klebsiella oxytoca.